A 299-amino-acid chain; its full sequence is Maintenance of mitochondrial morphology protein 1 (299 aa).

The Lumenal segment spans residues 1–15 (MTNIIFSLQPTFTQG). Residues 16-36 (LILGQLSVLVLLGLILKYLFL) traverse the membrane as a helical segment. Over 37–299 (DSTKNPFETT…QEESKRQEEA (263 aa)) the chain is Cytoplasmic. The disordered stretch occupies residues 47 to 68 (SYHPQFDRKPARKQQAQDSQSQ). The SMP-LTD domain maps to 73-281 (DVESLDWFNL…LPGLASVAEA (209 aa)).

It belongs to the MMM1 family. Homodimer. Component of the ER-mitochondria encounter structure (ERMES) or MDM complex, composed of MMM1, MDM10, MDM12 and MDM34. An MMM1 homodimer associates with one molecule of MDM12 on each side in a pairwise head-to-tail manner, and the SMP-LTD domains of MMM1 and MDM12 generate a continuous hydrophobic tunnel for phospholipid trafficking.

The protein localises to the endoplasmic reticulum membrane. Its function is as follows. Component of the ERMES/MDM complex, which serves as a molecular tether to connect the endoplasmic reticulum (ER) and mitochondria. Components of this complex are involved in the control of mitochondrial shape and protein biogenesis, and function in nonvesicular lipid trafficking between the ER and mitochondria. The MDM12-MMM1 subcomplex functions in the major beta-barrel assembly pathway that is responsible for biogenesis of all outer membrane beta-barrel proteins, and acts in a late step after the SAM complex. The MDM10-MDM12-MMM1 subcomplex further acts in the TOM40-specific pathway after the action of the MDM12-MMM1 complex. Essential for establishing and maintaining the structure of mitochondria and maintenance of mtDNA nucleoids. The polypeptide is Maintenance of mitochondrial morphology protein 1 (Coprinopsis cinerea (strain Okayama-7 / 130 / ATCC MYA-4618 / FGSC 9003) (Inky cap fungus)).